Reading from the N-terminus, the 943-residue chain is 2-oxoglutarate dehydrogenase E1 component (943 aa).

This sequence belongs to the alpha-ketoglutarate dehydrogenase family. Homodimer. Part of the 2-oxoglutarate dehydrogenase (OGDH) complex composed of E1 (2-oxoglutarate dehydrogenase), E2 (dihydrolipoamide succinyltransferase) and E3 (dihydrolipoamide dehydrogenase); the complex contains multiple copies of the three enzymatic components (E1, E2 and E3). Requires thiamine diphosphate as cofactor.

The enzyme catalyses N(6)-[(R)-lipoyl]-L-lysyl-[protein] + 2-oxoglutarate + H(+) = N(6)-[(R)-S(8)-succinyldihydrolipoyl]-L-lysyl-[protein] + CO2. Functionally, E1 component of the 2-oxoglutarate dehydrogenase (OGDH) complex which catalyzes the decarboxylation of 2-oxoglutarate, the first step in the conversion of 2-oxoglutarate to succinyl-CoA and CO(2). The protein is 2-oxoglutarate dehydrogenase E1 component of Shouchella clausii (strain KSM-K16) (Alkalihalobacillus clausii).